The primary structure comprises 662 residues: Calcium-dependent protease (662 aa).

Residues Gln196–Val529 enclose the Peptidase S8 domain. Residues Asp233, His270, and Ser466 each act as charge relay system in the active site. The region spanning Ala535 to Phe662 is the P/Homo B domain.

It belongs to the peptidase S8 family.

The protein localises to the cytoplasm. Degrades phycobiliproteins in vitro. Has a substrate specificity similar to that of trypsin. The sequence is that of Calcium-dependent protease (prcA) from Nostoc sp. (strain PCC 7120 / SAG 25.82 / UTEX 2576).